The primary structure comprises 224 residues: ATP phosphoribosyltransferase (224 aa).

It belongs to the ATP phosphoribosyltransferase family. Short subfamily. As to quaternary structure, heteromultimer composed of HisG and HisZ subunits.

The protein localises to the cytoplasm. It carries out the reaction 1-(5-phospho-beta-D-ribosyl)-ATP + diphosphate = 5-phospho-alpha-D-ribose 1-diphosphate + ATP. The protein operates within amino-acid biosynthesis; L-histidine biosynthesis; L-histidine from 5-phospho-alpha-D-ribose 1-diphosphate: step 1/9. Functionally, catalyzes the condensation of ATP and 5-phosphoribose 1-diphosphate to form N'-(5'-phosphoribosyl)-ATP (PR-ATP). Has a crucial role in the pathway because the rate of histidine biosynthesis seems to be controlled primarily by regulation of HisG enzymatic activity. This Cupriavidus metallidurans (strain ATCC 43123 / DSM 2839 / NBRC 102507 / CH34) (Ralstonia metallidurans) protein is ATP phosphoribosyltransferase.